The primary structure comprises 213 residues: Receptor-binding cancer antigen expressed on SiSo cells (213 aa).

Residues 1–6 (MAITQF) are Extracellular-facing. Residues 7–27 (RLFKVCTCLATVLSFLKRLIC) form a helical; Signal-anchor for type III membrane protein membrane-spanning segment. Residues 28-213 (RSGRGRKLSG…EQNKMGVKLS (186 aa)) lie on the Cytoplasmic side of the membrane. At S36 the chain carries Phosphoserine. T41 is modified (phosphothreonine). A Phosphotyrosine modification is found at Y94. A coiled-coil region spans residues 168-209 (QAEEVLRQQKIADREKRAAEQQRKKMEKEAQRLLKKEQNKMG). Over residues 179–206 (ADREKRAAEQQRKKMEKEAQRLLKKEQN) the composition is skewed to basic and acidic residues. The disordered stretch occupies residues 179-213 (ADREKRAAEQQRKKMEKEAQRLLKKEQNKMGVKLS).

In terms of assembly, homodimer.

It localises to the golgi apparatus membrane. In terms of biological role, may participate in suppression of cell proliferation and induces apoptotic cell death through activation of interleukin-1-beta converting enzyme (ICE)-like proteases. The polypeptide is Receptor-binding cancer antigen expressed on SiSo cells (Ebag9) (Rattus norvegicus (Rat)).